Consider the following 312-residue polypeptide: Malate dehydrogenase (312 aa).

NAD(+) contacts are provided by residues 12–17 and aspartate 36; that span reads GAGFTG. Residues arginine 87 and arginine 93 each coordinate substrate. NAD(+) is bound by residues asparagine 100 and 123–125; that span reads LTN. Asparagine 125 serves as a coordination point for substrate. Serine 149 bears the Phosphoserine mark. Arginine 156 provides a ligand contact to substrate. Histidine 180 acts as the Proton acceptor in catalysis.

The protein belongs to the LDH/MDH superfamily. MDH type 3 family. Homotetramer.

It catalyses the reaction (S)-malate + NAD(+) = oxaloacetate + NADH + H(+). In terms of biological role, catalyzes the reversible oxidation of malate to oxaloacetate. In Bacillus israeli, this protein is Malate dehydrogenase.